A 267-amino-acid polypeptide reads, in one-letter code: Small ribosomal subunit protein uS2 (267 aa).

The interval 225–267 (LREQELEGEEQEEAAPATEEEKKELIEEAVAEGEAEETEEEEK) is disordered. Over residues 251–267 (EEAVAEGEAEETEEEEK) the composition is skewed to acidic residues.

This sequence belongs to the universal ribosomal protein uS2 family.

The chain is Small ribosomal subunit protein uS2 from Nitratiruptor sp. (strain SB155-2).